Reading from the N-terminus, the 93-residue chain is Defensin alpha 4 (93 aa).

An N-terminal signal peptide occupies residues 1 to 19; sequence MRTLTLLITLLLLALHTQA. The propeptide occupies 20–62; that stretch reads ESPQERAKAAPDQDMVMEDQDIFISFGGYKGTVLQDAVVKAGQ. Cystine bridges form between Cys-64-Cys-92, Cys-66-Cys-81, and Cys-71-Cys-91.

It belongs to the alpha-defensin family. In terms of tissue distribution, expressed in neutrophils (at protein level). Highest expression in bone marrow and to a much lesser extent in small intestine.

It is found in the secreted. Functionally, host-defense peptide that has antimicrobial activity against Gram-positive and Gram-negative bacteria and fungi (in vitro). Exhibits activity against E.coli, A.calcoaceticus, S,aureus and C.albicans. The sequence is that of Defensin alpha 4 from Rattus norvegicus (Rat).